A 156-amino-acid chain; its full sequence is Small ribosomal subunit protein uS7 (156 aa).

It belongs to the universal ribosomal protein uS7 family. In terms of assembly, part of the 30S ribosomal subunit. Contacts proteins S9 and S11.

Functionally, one of the primary rRNA binding proteins, it binds directly to 16S rRNA where it nucleates assembly of the head domain of the 30S subunit. Is located at the subunit interface close to the decoding center, probably blocks exit of the E-site tRNA. This is Small ribosomal subunit protein uS7 from Desulforudis audaxviator (strain MP104C).